We begin with the raw amino-acid sequence, 220 residues long: Superoxide dismutase [Fe] (220 aa).

Positions 26, 73, 164, and 168 each coordinate Fe cation.

This sequence belongs to the iron/manganese superoxide dismutase family. As to quaternary structure, homodimer. Requires Fe cation as cofactor.

It catalyses the reaction 2 superoxide + 2 H(+) = H2O2 + O2. Its function is as follows. Destroys superoxide anion radicals which are normally produced within the cells and which are toxic to biological systems. The polypeptide is Superoxide dismutase [Fe] (sodB) (Campylobacter coli).